Reading from the N-terminus, the 205-residue chain is Holliday junction branch migration complex subunit RuvA (205 aa).

Residues 1 to 64 (MIGKLKGTID…EDQLKLFGFL (64 aa)) are domain I. The tract at residues 65–143 (SALEREWFRL…AFSGEMAPSI (79 aa)) is domain II. Residues 144-153 (GLKQELGEGV) form a flexible linker region. The tract at residues 153–205 (VAAAPVADAVSALTNLGYSRDQAANAVAAALKNGGEGGDSAKLIRLGLKELSR) is domain III.

Belongs to the RuvA family. Homotetramer. Forms an RuvA(8)-RuvB(12)-Holliday junction (HJ) complex. HJ DNA is sandwiched between 2 RuvA tetramers; dsDNA enters through RuvA and exits via RuvB. An RuvB hexamer assembles on each DNA strand where it exits the tetramer. Each RuvB hexamer is contacted by two RuvA subunits (via domain III) on 2 adjacent RuvB subunits; this complex drives branch migration. In the full resolvosome a probable DNA-RuvA(4)-RuvB(12)-RuvC(2) complex forms which resolves the HJ.

Its subcellular location is the cytoplasm. Functionally, the RuvA-RuvB-RuvC complex processes Holliday junction (HJ) DNA during genetic recombination and DNA repair, while the RuvA-RuvB complex plays an important role in the rescue of blocked DNA replication forks via replication fork reversal (RFR). RuvA specifically binds to HJ cruciform DNA, conferring on it an open structure. The RuvB hexamer acts as an ATP-dependent pump, pulling dsDNA into and through the RuvAB complex. HJ branch migration allows RuvC to scan DNA until it finds its consensus sequence, where it cleaves and resolves the cruciform DNA. The protein is Holliday junction branch migration complex subunit RuvA of Rhizobium meliloti (strain 1021) (Ensifer meliloti).